We begin with the raw amino-acid sequence, 163 residues long: Small heat shock protein C1 (163 aa).

One can recognise a sHSP domain in the interval 55–163; sequence TFYESSSLKS…EQDSREITIN (109 aa).

This sequence belongs to the small heat shock protein (HSP20) family.

The chain is Small heat shock protein C1 (hspC1) from Rickettsia prowazekii (strain Madrid E).